The sequence spans 248 residues: 4-hydroxy-tetrahydrodipicolinate reductase (248 aa).

NAD(+) is bound by residues 9 to 14 (GARGKV), 77 to 79 (GTT), and 104 to 107 (APNF). The active-site Proton donor/acceptor is the His-134. Residue His-135 coordinates (S)-2,3,4,5-tetrahydrodipicolinate. The Proton donor role is filled by Lys-138. 144–145 (GT) serves as a coordination point for (S)-2,3,4,5-tetrahydrodipicolinate.

Belongs to the DapB family.

Its subcellular location is the cytoplasm. It catalyses the reaction (S)-2,3,4,5-tetrahydrodipicolinate + NAD(+) + H2O = (2S,4S)-4-hydroxy-2,3,4,5-tetrahydrodipicolinate + NADH + H(+). The enzyme catalyses (S)-2,3,4,5-tetrahydrodipicolinate + NADP(+) + H2O = (2S,4S)-4-hydroxy-2,3,4,5-tetrahydrodipicolinate + NADPH + H(+). It participates in amino-acid biosynthesis; L-lysine biosynthesis via DAP pathway; (S)-tetrahydrodipicolinate from L-aspartate: step 4/4. Functionally, catalyzes the conversion of 4-hydroxy-tetrahydrodipicolinate (HTPA) to tetrahydrodipicolinate. The protein is 4-hydroxy-tetrahydrodipicolinate reductase of Nocardia farcinica (strain IFM 10152).